The sequence spans 470 residues: ATP synthase subunit beta (470 aa).

158-165 (GGAGVGKT) contacts ATP.

Belongs to the ATPase alpha/beta chains family. F-type ATPases have 2 components, CF(1) - the catalytic core - and CF(0) - the membrane proton channel. CF(1) has five subunits: alpha(3), beta(3), gamma(1), delta(1), epsilon(1). CF(0) has three main subunits: a(1), b(2) and c(9-12). The alpha and beta chains form an alternating ring which encloses part of the gamma chain. CF(1) is attached to CF(0) by a central stalk formed by the gamma and epsilon chains, while a peripheral stalk is formed by the delta and b chains.

Its subcellular location is the cell membrane. The catalysed reaction is ATP + H2O + 4 H(+)(in) = ADP + phosphate + 5 H(+)(out). In terms of biological role, produces ATP from ADP in the presence of a proton gradient across the membrane. The catalytic sites are hosted primarily by the beta subunits. This chain is ATP synthase subunit beta, found in Halalkalibacterium halodurans (strain ATCC BAA-125 / DSM 18197 / FERM 7344 / JCM 9153 / C-125) (Bacillus halodurans).